We begin with the raw amino-acid sequence, 109 residues long: Large ribosomal subunit protein uL22 (109 aa).

It belongs to the universal ribosomal protein uL22 family. In terms of assembly, part of the 50S ribosomal subunit.

Its function is as follows. This protein binds specifically to 23S rRNA; its binding is stimulated by other ribosomal proteins, e.g. L4, L17, and L20. It is important during the early stages of 50S assembly. It makes multiple contacts with different domains of the 23S rRNA in the assembled 50S subunit and ribosome. In terms of biological role, the globular domain of the protein is located near the polypeptide exit tunnel on the outside of the subunit, while an extended beta-hairpin is found that lines the wall of the exit tunnel in the center of the 70S ribosome. This is Large ribosomal subunit protein uL22 from Cupriavidus metallidurans (strain ATCC 43123 / DSM 2839 / NBRC 102507 / CH34) (Ralstonia metallidurans).